The chain runs to 1301 residues: Tyrosine-protein phosphatase 99A (1301 aa).

A signal peptide spans 1–28 (MPRPQHHALLRAMLKLLLFASIAEHCAT). Residues 29 to 394 (ALPTNSSNSP…RQSHNDYNLA (366 aa)) are Extracellular-facing. The tract at residues 31 to 63 (PTNSSNSPSSPSPFTVASLPPTTASSSSSPAVI) is disordered. Asn33 is a glycosylation site (N-linked (GlcNAc...) asparagine). Residues 33–63 (NSSNSPSSPSPFTVASLPPTTASSSSSPAVI) are compositionally biased toward low complexity. Fibronectin type-III domains are found at residues 66–165 (SSFD…YAAV), 173–269 (KPQN…TDVG), and 270–376 (GPSA…LQPN). 5 N-linked (GlcNAc...) asparagine glycosylation sites follow: Asn176, Asn212, Asn278, Asn322, and Asn336. Residues 395–415 (VLVGIIFSCFGIILIIMAFFL) traverse the membrane as a helical segment. The Cytoplasmic segment spans residues 416–1301 (WSRKCFHAAY…TDAQNLDIVG (886 aa)). 2 consecutive Tyrosine-protein phosphatase domains span residues 476–741 (FSRE…LVEA) and 764–1016 (LEQQ…LSFL). The active-site Phosphocysteine intermediate is Cys682. The span at 1092-1106 (TALNETVSTPSTDTN) shows a compositional bias: polar residues. Disordered stretches follow at residues 1092-1199 (TALN…PTIP) and 1257-1281 (VGDL…NNHI). Over residues 1107–1130 (PSLLPILSLLPPTVAPLSSSSSTT) the composition is skewed to low complexity. Residues 1131–1142 (PPTPSTPTPQPP) show a composition bias toward pro residues. The segment covering 1150–1161 (HSPSDLSHQISS) has biased composition (polar residues). Residues 1162–1188 (TVANAASPVTPATASASAGATPTTPMT) show a composition bias toward low complexity. Residues 1264–1273 (NADNSPTASP) are compositionally biased toward polar residues.

This sequence belongs to the protein-tyrosine phosphatase family. Receptor class subfamily. Selectively expressed in a subset of axons and pioneer neurons (including aCC and RP2) in the embryo.

Its subcellular location is the membrane. It carries out the reaction O-phospho-L-tyrosyl-[protein] + H2O = L-tyrosyl-[protein] + phosphate. Functionally, may play a key role in signal transduction and growth control. May have a role in the establishment of the intersegmental and segmental nerves. The protein is Tyrosine-protein phosphatase 99A (Ptp99A) of Drosophila melanogaster (Fruit fly).